A 512-amino-acid chain; its full sequence is 2,3-bisphosphoglycerate-independent phosphoglycerate mutase (512 aa).

Residues Asp12 and Ser62 each contribute to the Mn(2+) site. Ser62 (phosphoserine intermediate) is an active-site residue. Residues His123, 153 to 154 (RD), Arg185, Arg191, 260 to 263 (RPDR), and Lys333 contribute to the substrate site. The Mn(2+) site is built by Asp400, His404, Asp441, His442, and His460.

This sequence belongs to the BPG-independent phosphoglycerate mutase family. Monomer. Mn(2+) serves as cofactor.

The catalysed reaction is (2R)-2-phosphoglycerate = (2R)-3-phosphoglycerate. Its pathway is carbohydrate degradation; glycolysis; pyruvate from D-glyceraldehyde 3-phosphate: step 3/5. Its function is as follows. Catalyzes the interconversion of 2-phosphoglycerate and 3-phosphoglycerate. This chain is 2,3-bisphosphoglycerate-independent phosphoglycerate mutase, found in Clostridium perfringens (strain SM101 / Type A).